The sequence spans 449 residues: Putative transporter C83.11 (449 aa).

9 consecutive transmembrane segments (helical) span residues 7-27 (LSHI…LWYI), 47-67 (VTLT…CLLF), 84-104 (VLYT…FGSL), 109-129 (IPVS…VLAY), 136-156 (VYSA…TLAC), 164-184 (IVGL…NIFG), 205-225 (LNLL…VWLY), 255-275 (ILAF…ASLI), and 278-298 (IFVI…TQGS). Phosphoserine occurs at positions 348 and 352. Tyr355 bears the Phosphotyrosine mark. Polar residues predominate over residues 382–415 (NSVYSNEGVTSSVSGNATPASVRQSTQNDFSNSN). Residues 382–416 (NSVYSNEGVTSSVSGNATPASVRQSTQNDFSNSNI) are disordered.

It belongs to the TPT transporter family.

It is found in the membrane. The polypeptide is Putative transporter C83.11 (Schizosaccharomyces pombe (strain 972 / ATCC 24843) (Fission yeast)).